The following is a 551-amino-acid chain: Pyrroline-5-carboxylate reductase 1 (551 aa).

The interval 279 to 551 is disordered; sequence LYTQKQQNKK…RHEVKTEQIN (273 aa). Composition is skewed to low complexity over residues 282–298, 306–342, 383–415, 424–441, 448–475, 487–496, and 503–520; these read QKQQ…QQHQ, QQHQ…YGHQ, QQYQ…SNQR, KSPQ…QPSS, QQQQ…QQQP, QQQQPQQQQQ, and YNNN…NNYN. Basic and acidic residues predominate over residues 537–551; sequence YHDEKRHEVKTEQIN.

Belongs to the pyrroline-5-carboxylate reductase family. In terms of assembly, homodecamer; composed of 5 homodimers.

The catalysed reaction is L-proline + NADP(+) = (S)-1-pyrroline-5-carboxylate + NADPH + 2 H(+). The enzyme catalyses L-proline + NAD(+) = (S)-1-pyrroline-5-carboxylate + NADH + 2 H(+). It participates in amino-acid biosynthesis; L-proline biosynthesis; L-proline from L-glutamate 5-semialdehyde: step 1/1. This is Pyrroline-5-carboxylate reductase 1 (pycr1) from Dictyostelium discoideum (Social amoeba).